Here is a 339-residue protein sequence, read N- to C-terminus: Fructose-1,6-bisphosphatase class 1 (339 aa).

Residues Glu94, Asp116, Leu118, and Asp119 each coordinate Mg(2+). Substrate is bound by residues Asp119–Ser122, Asn210, and Lys276. Position 282 (Glu282) interacts with Mg(2+).

This sequence belongs to the FBPase class 1 family. Homotetramer. Mg(2+) is required as a cofactor.

It is found in the cytoplasm. The catalysed reaction is beta-D-fructose 1,6-bisphosphate + H2O = beta-D-fructose 6-phosphate + phosphate. It participates in carbohydrate biosynthesis; gluconeogenesis. The chain is Fructose-1,6-bisphosphatase class 1 from Burkholderia ambifaria (strain ATCC BAA-244 / DSM 16087 / CCUG 44356 / LMG 19182 / AMMD) (Burkholderia cepacia (strain AMMD)).